The chain runs to 479 residues: Flavonol 3-O-glucosyltransferase UGT71C4 (479 aa).

Residue His-17 is the Proton acceptor of the active site. Residue His-17 participates in an anthocyanidin binding. Residue Asp-127 is the Charge relay of the active site. Residues Thr-150, Ala-350, Gln-352, His-367, Trp-370, Asn-371, Ser-372, and Glu-375 each contribute to the UDP-alpha-D-glucose site. An an anthocyanidin-binding site is contributed by Ala-390. UDP-alpha-D-glucose-binding residues include Glu-391 and Gln-392.

The protein belongs to the UDP-glycosyltransferase family.

It catalyses the reaction a flavonol + UDP-alpha-D-glucose = a flavonol 3-O-beta-D-glucoside + UDP + H(+). It carries out the reaction a 7-O-hydroxy-flavonol + UDP-alpha-D-glucose = a flavonol 7-O-beta-D-glucoside + UDP + H(+). Its function is as follows. Possesses quercetin 3-O-glucosyltransferase and 7-O-glucosyltransferase activities in vitro. Also active in vitro on benzoates and benzoate derivatives. This chain is Flavonol 3-O-glucosyltransferase UGT71C4, found in Arabidopsis thaliana (Mouse-ear cress).